The chain runs to 869 residues: Leucine--tRNA ligase (869 aa).

Residues 51–61 (PYPSGRIHMGH) carry the 'HIGH' region motif. The short motif at 636–640 (KMSKS) is the 'KMSKS' region element. K639 is an ATP binding site.

Belongs to the class-I aminoacyl-tRNA synthetase family.

It localises to the cytoplasm. The catalysed reaction is tRNA(Leu) + L-leucine + ATP = L-leucyl-tRNA(Leu) + AMP + diphosphate. The chain is Leucine--tRNA ligase from Dinoroseobacter shibae (strain DSM 16493 / NCIMB 14021 / DFL 12).